The primary structure comprises 522 residues: 2-isopropylmalate synthase (522 aa).

One can recognise a Pyruvate carboxyltransferase domain in the interval 5–267 (VIIFDTTLRD…ETGINAKEIH (263 aa)). The Mn(2+) site is built by D14, H202, H204, and N238. The segment at 392–522 (QLQQLVVQSD…MQKNRELGGV (131 aa)) is regulatory domain.

This sequence belongs to the alpha-IPM synthase/homocitrate synthase family. LeuA type 1 subfamily. Homodimer. It depends on Mn(2+) as a cofactor.

The protein resides in the cytoplasm. It carries out the reaction 3-methyl-2-oxobutanoate + acetyl-CoA + H2O = (2S)-2-isopropylmalate + CoA + H(+). It functions in the pathway amino-acid biosynthesis; L-leucine biosynthesis; L-leucine from 3-methyl-2-oxobutanoate: step 1/4. In terms of biological role, catalyzes the condensation of the acetyl group of acetyl-CoA with 3-methyl-2-oxobutanoate (2-ketoisovalerate) to form 3-carboxy-3-hydroxy-4-methylpentanoate (2-isopropylmalate). In Shewanella baltica (strain OS185), this protein is 2-isopropylmalate synthase.